The chain runs to 160 residues: Eosinophil cationic protein (160 aa).

Positions 1–27 (MVPKLFTSQICLLLLLGLMGVEGSLHA) are cleaved as a signal peptide. The segment at 28–72 (RPPQFTKAQWFAIQHINVNPPRCTIAMRVINNYQRRCKNQNTFLR) is required for nearly all of the bactericidal activities; partially involved in LPS-binding. Histidine 42 (proton acceptor) is an active-site residue. 4 disulfide bridges follow: cysteine 50–cysteine 110, cysteine 64–cysteine 123, cysteine 82–cysteine 138, and cysteine 89–cysteine 98. Tyrosine 60 carries the post-translational modification 3'-nitrotyrosine. Residue 65-69 (KNQNT) coordinates substrate. Asparagine 92 and asparagine 119 each carry an N-linked (GlcNAc...) asparagine glycan. The Proton donor role is filled by histidine 155.

The protein belongs to the pancreatic ribonuclease family. In terms of assembly, interacts with bacterial lipopolysaccharide (LPS) and lipoteichoic acid (LTA). In vitro interacts with phospholipid bilayers.

Its subcellular location is the secreted. Cytotoxin and helminthotoxin with low-efficiency ribonuclease activity. Possesses a wide variety of biological activities. Exhibits antibacterial activity. The protein is Eosinophil cationic protein (RNASE3) of Macaca fascicularis (Crab-eating macaque).